The sequence spans 175 residues: MATERKSRTKRAKKEETTWQERVIQIRRVSKVVKGGKKLSFRAIVVVGNERGQVGVGVGKASDVIGAVKKGVADGKKHLIDIPITKSNSIPHPIDGVGGGAKVIMRPAAPGTGVIAGGAVRTVLELAGVRNVLAKQLGSNNPLNNARAAVNALSTLRTLSEVAEDRGIPIQNLYI.

An S5 DRBM domain is found at 19–82; it reads WQERVIQIRR…ADGKKHLIDI (64 aa).

It belongs to the universal ribosomal protein uS5 family. As to quaternary structure, part of the 30S ribosomal subunit. Contacts proteins S4 and S8.

Functionally, with S4 and S12 plays an important role in translational accuracy. Its function is as follows. Located at the back of the 30S subunit body where it stabilizes the conformation of the head with respect to the body. In Nostoc punctiforme (strain ATCC 29133 / PCC 73102), this protein is Small ribosomal subunit protein uS5.